A 316-amino-acid polypeptide reads, in one-letter code: Ribosomal RNA small subunit methyltransferase H (316 aa).

S-adenosyl-L-methionine-binding positions include 35–37 (SGH), aspartate 55, phenylalanine 84, aspartate 105, and glutamine 112.

This sequence belongs to the methyltransferase superfamily. RsmH family.

It localises to the cytoplasm. The catalysed reaction is cytidine(1402) in 16S rRNA + S-adenosyl-L-methionine = N(4)-methylcytidine(1402) in 16S rRNA + S-adenosyl-L-homocysteine + H(+). In terms of biological role, specifically methylates the N4 position of cytidine in position 1402 (C1402) of 16S rRNA. The polypeptide is Ribosomal RNA small subunit methyltransferase H (Streptococcus pyogenes serotype M6 (strain ATCC BAA-946 / MGAS10394)).